The sequence spans 121 residues: Huntingtin-interacting protein K (121 aa).

A compositionally biased stretch (acidic residues) spans 1–13; that stretch reads MATEGDVELELET. A disordered region spans residues 1–75; sequence MATEGDVELE…EQKAKQEREK (75 aa). 2 stretches are compositionally biased toward basic and acidic residues: residues 20–47 and 60–75; these read RPPEKPRKHDSGAADLERVTDYAEEKEI and GDRRSREQKAKQEREK. Position 30 is a phosphoserine (serine 30). Residues 52-121 form a required for association with the NAA10-NAA15 complex region; the sequence is LETAMSVIGD…VVEALIALTN (70 aa). Positions 62–107 form a coiled coil; the sequence is RRSREQKAKQEREKELAKVTIKKEDLELIMTEMEISRAAAERSLRE.

As to quaternary structure, component of the N-terminal acetyltransferase A (NatA)/HYPK complex at least composed of NAA10, NAA15 and HYPK, which has N-terminal acetyltransferase activity. Within the complex interacts with NAA10. Within the complex interacts with NAA15. Predominantly interacts with NAA15 in the NAA10-NAA15 complex (also called the NatA complex); the interaction with the NatA complex reduces the acetylation activity of the NatA complex. Interacts with HTT (via N-terminus). The NatA complex is required for HYPK stability and for reducing polyQ aggregation of HTT. Component of the N-terminal acetyltransferase E (NatE)/HYPK complex at least composed of NAA10, NAA15, NAA50 and HYPK. Within the complex interacts with NAA10 and NAA15. Does not interact with NAA50. Interaction with NAA15 reduces the capacity of NAA15 to interact with NAA50. Its capacity to interact with the NatA complex is reduced by NAA50. Does not interact with the N-terminal acetyltransferase B (NatB) complex component NAA25 or the N-terminal acetyltransferase C (NatC) complex component NAA35.

It is found in the nucleus. The protein localises to the cytoplasm. In terms of biological role, component of several N-terminal acetyltransferase complexes. Inhibits the N-terminal acetylation activity of the N-terminal acetyltransferase NAA10-NAA15 complex (also called the NatA complex). Has chaperone-like activity preventing polyglutamine (polyQ) aggregation of HTT in neuronal cells probably while associated with the NatA complex. May play a role in the NatA complex-mediated N-terminal acetylation of PCNP. This chain is Huntingtin-interacting protein K, found in Homo sapiens (Human).